We begin with the raw amino-acid sequence, 393 residues long: Dual specificity mitogen-activated protein kinase kinase 1 (393 aa).

The disordered stretch occupies residues 1–27 (MPKKKPTPIQLNPAPDGSAVNGTSSAE). Positions 68–361 (FEKISELGAG…LKQLMVHAFI (294 aa)) constitute a Protein kinase domain. Residues 74-82 (LGAGNGGVV) and Lys-97 each bind ATP. The Proton acceptor role is filled by Asp-190. Phosphoserine; by RAF occurs at positions 218 and 222. The segment at 270-307 (ELELLFGCQVEGDAAETPPRPRTPGRPLSSYGMDSRPP) is RAF1-binding. Position 286 is a phosphothreonine (Thr-286). The residue at position 292 (Thr-292) is a Phosphothreonine; by MAPK1. Ser-298 carries the post-translational modification Phosphoserine; by PAK.

Belongs to the protein kinase superfamily. STE Ser/Thr protein kinase family. MAP kinase kinase subfamily. In terms of assembly, found in a complex with at least BRAF, HRAS, MAP2K1, MAPK3/ERK1 and RGS14. Forms a heterodimer with MAP2K2/MEK2. Forms heterodimers with KSR2 which further dimerize to form tetramers. Interacts with KSR1 or KSR2 and BRAF; the interaction with KSR1 or KSR2 mediates KSR1-BRAF or KSR2-BRAF dimerization. Interacts with ARBB2, LAMTOR3, MAPK1/ERK2 and RAF1. Interacts with MAPK1/ERK2. Interacts with MORG1. Interacts with PPARG. Interacts with VRK2. Interacts with SGK1. Interacts with BIRC6/bruce. Interacts with KAT7; the interaction promotes KAT7 phosphorylation. Interacts with RAF1 and NEK10; the interaction is required for ERK1/2-signaling pathway activation in response to UV irradiation. Interacts with TRAF3IP3. Interacts with MOS. Post-translationally, phosphorylation at Ser-218 and Ser-222 by MAP kinase kinase kinases (BRAF or MEKK1) positively regulates kinase activity. Also phosphorylated at Thr-292 by MAPK1/ERK2 and at Ser-298 by PAK. MAPK1/ERK2 phosphorylation of Thr-292 occurs in response to cellular adhesion and leads to inhibition of Ser-298 phosphorylation by PAK. Autophosphorylated at Ser-218 and Ser-222, autophosphosphorylation is promoted by NEK10 following UV irradiation.

The protein resides in the cytoplasm. It is found in the cytoskeleton. The protein localises to the microtubule organizing center. It localises to the centrosome. Its subcellular location is the spindle pole body. The protein resides in the nucleus. It is found in the membrane. The enzyme catalyses L-seryl-[protein] + ATP = O-phospho-L-seryl-[protein] + ADP + H(+). The catalysed reaction is L-threonyl-[protein] + ATP = O-phospho-L-threonyl-[protein] + ADP + H(+). It carries out the reaction L-tyrosyl-[protein] + ATP = O-phospho-L-tyrosyl-[protein] + ADP + H(+). Its activity is regulated as follows. Ras proteins such as HRAS mediate the activation of RAF proteins such as RAF1 or BRAF which in turn activate extracellular signal-regulated kinases (ERK) through MAPK (mitogen-activated protein kinases) and ERK kinases MAP2K1/MEK1 and MAP2K2/MEK2. Activation occurs through phosphorylation of Ser-218 and Ser-222. MAP2K1/MEK1 binds KSR1 or KSR2 releasing the inhibitory intramolecular interaction between KSR1 or KSR2 protein kinase and N-terminal domains. This allows KSR1 or KSR2 dimerization with BRAF leading to BRAF activation and phosphorylation of MAP2K1. MAP2K1/MEK1 is also the target of negative feed-back regulation by its substrate kinases, such as MAPK1/ERK2. These phosphorylate MAP2K1/MEK1 on Thr-292, thereby facilitating dephosphorylation of the activating residues Ser-218 and Ser-222. Inhibited by serine/threonine phosphatase 2A. Its function is as follows. Dual specificity protein kinase which acts as an essential component of the MAP kinase signal transduction pathway. Binding of extracellular ligands such as growth factors, cytokines and hormones to their cell-surface receptors activates RAS and this initiates RAF1 activation. RAF1 then further activates the dual-specificity protein kinases MAP2K1/MEK1 and MAP2K2/MEK2. Both MAP2K1/MEK1 and MAP2K2/MEK2 function specifically in the MAPK/ERK cascade, and catalyze the concomitant phosphorylation of a threonine and a tyrosine residue in a Thr-Glu-Tyr sequence located in the extracellular signal-regulated kinases MAPK3/ERK1 and MAPK1/ERK2, leading to their activation and further transduction of the signal within the MAPK/ERK cascade. Activates BRAF in a KSR1 or KSR2-dependent manner; by binding to KSR1 or KSR2 releases the inhibitory intramolecular interaction between KSR1 or KSR2 protein kinase and N-terminal domains which promotes KSR1 or KSR2-BRAF dimerization and BRAF activation. Depending on the cellular context, this pathway mediates diverse biological functions such as cell growth, adhesion, survival and differentiation, predominantly through the regulation of transcription, metabolism and cytoskeletal rearrangements. One target of the MAPK/ERK cascade is peroxisome proliferator-activated receptor gamma (PPARG), a nuclear receptor that promotes differentiation and apoptosis. MAP2K1/MEK1 has been shown to export PPARG from the nucleus. The MAPK/ERK cascade is also involved in the regulation of endosomal dynamics, including lysosome processing and endosome cycling through the perinuclear recycling compartment (PNRC), as well as in the fragmentation of the Golgi apparatus during mitosis. The sequence is that of Dual specificity mitogen-activated protein kinase kinase 1 from Rattus norvegicus (Rat).